Here is a 75-residue protein sequence, read N- to C-terminus: Small ribosomal subunit protein bS21 (75 aa).

The segment at 52–75 is disordered; the sequence is RRARKLARKRAQREGLIGGRPGAR. A compositionally biased stretch (basic residues) spans 53–62; it reads RARKLARKRA.

It belongs to the bacterial ribosomal protein bS21 family.

The polypeptide is Small ribosomal subunit protein bS21 (Brucella anthropi (strain ATCC 49188 / DSM 6882 / CCUG 24695 / JCM 21032 / LMG 3331 / NBRC 15819 / NCTC 12168 / Alc 37) (Ochrobactrum anthropi)).